Consider the following 197-residue polypeptide: HTH-type transcriptional regulator BetI (197 aa).

The HTH tetR-type domain maps to 8 to 68 (PIRRQQLIEA…ATMGYIMSML (61 aa)). Positions 31 to 50 (SIALIARLAGVSNGIISHYF) form a DNA-binding region, H-T-H motif.

It participates in amine and polyamine biosynthesis; betaine biosynthesis via choline pathway [regulation]. Its function is as follows. Repressor involved in the biosynthesis of the osmoprotectant glycine betaine. It represses transcription of the choline transporter BetT and the genes of BetAB involved in the synthesis of glycine betaine. This chain is HTH-type transcriptional regulator BetI, found in Pseudomonas fluorescens (strain ATCC BAA-477 / NRRL B-23932 / Pf-5).